Reading from the N-terminus, the 490-residue chain is Cytochrome P450 71A25 (490 aa).

A helical transmembrane segment spans residues 1 to 21 (MMMMIILLWSIIFMTILFLKK). Cys-431 contributes to the heme binding site.

It belongs to the cytochrome P450 family. It depends on heme as a cofactor.

Its subcellular location is the membrane. This is Cytochrome P450 71A25 (CYP71A25) from Arabidopsis thaliana (Mouse-ear cress).